Consider the following 629-residue polypeptide: Embryonic polyadenylate-binding protein (629 aa).

RRM domains follow at residues 11–89 (ASLY…WSQR), 99–175 (GNVF…HFKS), 191–268 (TNVY…RAQK), and 294–370 (VNLY…LAQR). Residues 539 to 616 (QEPLTASSLA…AVAVLQAHQA (78 aa)) enclose the PABC domain.

The protein belongs to the polyadenylate-binding protein type-1 family. In terms of assembly, interacts with dazl in an RNA-independent manner. The C-terminus can self-associate and also interact with the C-terminus of pabpc1, independently of RNA. RRM 1 and RRM 2 interact with both eif4g1 and paip1, and the C-terminus also interacts with paip1. Prior to oocyte maturation, found in a complex with dazl and pum2 proteins and spdy1 mRNA; pum2 dissociates from the complex during maturation. Interacts with the translation termination factor sup35/erf3.

The protein resides in the cytoplasm. Binds and protects the poly(A) tail of mRNA with or without an AU-rich element (ARE) and prevents mRNA deadenylation. Stimulates the translation of mRNAs to which it is bound during early development. The sequence is that of Embryonic polyadenylate-binding protein from Xenopus tropicalis (Western clawed frog).